A 311-amino-acid polypeptide reads, in one-letter code: HPr kinase/phosphorylase (311 aa).

Active-site residues include H138 and K159. 153 to 160 (GDSGIGKS) serves as a coordination point for ATP. S160 contacts Mg(2+). D177 acts as the Proton acceptor; for phosphorylation activity. Proton donor; for dephosphorylation activity in catalysis. Residues 201 to 210 (LEIRGVGIIN) form an important for the catalytic mechanism of both phosphorylation and dephosphorylation region. E202 contacts Mg(2+). R243 is an active-site residue. Positions 264–269 (PVKTGR) are important for the catalytic mechanism of dephosphorylation.

This sequence belongs to the HPrK/P family. In terms of assembly, homohexamer. Requires Mg(2+) as cofactor.

It catalyses the reaction [HPr protein]-L-serine + ATP = [HPr protein]-O-phospho-L-serine + ADP + H(+). The enzyme catalyses [HPr protein]-O-phospho-L-serine + phosphate + H(+) = [HPr protein]-L-serine + diphosphate. Its function is as follows. Catalyzes the ATP- as well as the pyrophosphate-dependent phosphorylation of a specific serine residue in HPr, a phosphocarrier protein of the phosphoenolpyruvate-dependent sugar phosphotransferase system (PTS). HprK/P also catalyzes the pyrophosphate-producing, inorganic phosphate-dependent dephosphorylation (phosphorolysis) of seryl-phosphorylated HPr (P-Ser-HPr). The two antagonistic activities of HprK/P are regulated by several intracellular metabolites, which change their concentration in response to the absence or presence of rapidly metabolisable carbon sources (glucose, fructose, etc.) in the growth medium. Therefore, by controlling the phosphorylation state of HPr, HPrK/P is a sensor enzyme that plays a major role in the regulation of carbon metabolism and sugar transport: it mediates carbon catabolite repression (CCR), and regulates PTS-catalyzed carbohydrate uptake and inducer exclusion. This chain is HPr kinase/phosphorylase (hprK), found in Streptococcus mutans serotype c (strain ATCC 700610 / UA159).